The sequence spans 89 residues: MGFFKSLNSKPTPKEVAKDRLKLILIHDRGEIAPDIIEKIREEILEVISKYIDIQVEDVEISVNKNGDEEGENTSALIANIPIKSIKGR.

Belongs to the MinE family.

Prevents the cell division inhibition by proteins MinC and MinD at internal division sites while permitting inhibition at polar sites. This ensures cell division at the proper site by restricting the formation of a division septum at the midpoint of the long axis of the cell. The polypeptide is Cell division topological specificity factor (Clostridium beijerinckii (strain ATCC 51743 / NCIMB 8052) (Clostridium acetobutylicum)).